A 563-amino-acid polypeptide reads, in one-letter code: Arginine--tRNA ligase (563 aa).

Residues 123-133 carry the 'HIGH' region motif; that stretch reads PNIAKDMHVGH.

Belongs to the class-I aminoacyl-tRNA synthetase family. As to quaternary structure, monomer.

The protein resides in the cytoplasm. It carries out the reaction tRNA(Arg) + L-arginine + ATP = L-arginyl-tRNA(Arg) + AMP + diphosphate. The chain is Arginine--tRNA ligase (argS) from Chlamydia trachomatis serovar D (strain ATCC VR-885 / DSM 19411 / UW-3/Cx).